A 543-amino-acid chain; its full sequence is MSSVLPTPVLPTPGRNINRGHFPDDFIFGAGTSSYQIEGAAREGGRGPSIWDTFTHTHPELIQDGSNGDTAINSYNLYKEDIKIVKLMGLDAYRFSISWPRILPGGSINAGINQEGIKYYNNLIDELLANDIVPYVTLFHWDVPQALQDQYDGFLSDKIVDDFRDFAELCFWEFGDRVKNWITINEPESYSNFFGVAYDTPPKAHALKASRLLVPTTVARPSKPVRVFASTADPGTTTADQVYKVGHNLLLAHAAAIQVYRDKFQNTQEGTFGMALVTQWMKPLNENNPADVEAASRAFDFKFGWFMQPLITGEYPKSMRQLLGPRLREFTPDQKKLLIGSYDYVGVNYYTATYVSSAQPPHDKKKAVFHTDGNFYTTDSKDGVLIGPLAGPAWLNIVPEGIYHVLHDIKENYEDPVIYITENGVYEVNDTAKTLSEARVDTTRLHYLQDHLSKVLEARHQGVRVQGYLVWSLMDNWELRAGYTSRFGLIHVDYYNNFARYPKDSAIWFRNAFHKRLRIHVNKARPQEDDGAFDTPRKRLRKY.

Residues Q36, H140, 185-186, Y350, E422, W471, and F487 contribute to the a beta-D-glucoside site; that span reads NE. E186 (proton donor) is an active-site residue. The active-site Nucleophile is the E422.

This sequence belongs to the glycosyl hydrolase 1 family.

It localises to the cytoplasm. The protein localises to the cytosol. It catalyses the reaction deacetylipecoside + H2O = deacetylipecoside aglycone + D-glucose. The catalysed reaction is deacetylisoipecoside + H2O = deacetylisoipecoside aglycone + D-glucose. It functions in the pathway alkaloid biosynthesis. In terms of biological role, beta-glucosidase catalyzing deglucosylation on N-deacetylisoipecoside and N-deacetylipecoside. The chain is Ipecac alkaloid beta-glucosidase 2 from Carapichea ipecacuanha (Ipecac).